Here is a 305-residue protein sequence, read N- to C-terminus: Phosphatidylglycerol--prolipoprotein diacylglyceryl transferase (305 aa).

The next 3 membrane-spanning stretches (helical) occupy residues 10–30 (FLIS…GAII), 59–79 (LMLG…AFEW), and 92–112 (LTTG…STVI). Arg-140 is a binding site for a 1,2-diacyl-sn-glycero-3-phospho-(1'-sn-glycerol). The next 2 membrane-spanning stretches (helical) occupy residues 182–202 (LFHP…GILL) and 260–280 (IRVA…LIFL).

It belongs to the Lgt family.

Its subcellular location is the cell membrane. The enzyme catalyses L-cysteinyl-[prolipoprotein] + a 1,2-diacyl-sn-glycero-3-phospho-(1'-sn-glycerol) = an S-1,2-diacyl-sn-glyceryl-L-cysteinyl-[prolipoprotein] + sn-glycerol 1-phosphate + H(+). Its pathway is protein modification; lipoprotein biosynthesis (diacylglyceryl transfer). Its function is as follows. Catalyzes the transfer of the diacylglyceryl group from phosphatidylglycerol to the sulfhydryl group of the N-terminal cysteine of a prolipoprotein, the first step in the formation of mature lipoproteins. In Chloroflexus aggregans (strain MD-66 / DSM 9485), this protein is Phosphatidylglycerol--prolipoprotein diacylglyceryl transferase.